Consider the following 108-residue polypeptide: ATP-dependent Clp protease adapter protein ClpS (108 aa).

Belongs to the ClpS family. In terms of assembly, binds to the N-terminal domain of the chaperone ClpA.

Its function is as follows. Involved in the modulation of the specificity of the ClpAP-mediated ATP-dependent protein degradation. The chain is ATP-dependent Clp protease adapter protein ClpS from Cupriavidus metallidurans (strain ATCC 43123 / DSM 2839 / NBRC 102507 / CH34) (Ralstonia metallidurans).